We begin with the raw amino-acid sequence, 331 residues long: Neurogenic differentiation factor 4 (331 aa).

The disordered stretch occupies residues 1 to 80 (MSKTFVKSKE…GPKKKKMTKA (80 aa)). Positions 52-64 (DSIEEEEEEEEDG) are enriched in acidic residues. The segment covering 67–79 (PKRRGPKKKKMTK) has biased composition (basic residues). Residues 87–139 (ARRVKANARERTRMHGLNDALDNLRRVMPCYSKTQKLSKIETLRLARNYIWAL) enclose the bHLH domain. The disordered stretch occupies residues 246 to 265 (TPPYEGPLTPPLSISGNFSL).

In terms of assembly, efficient DNA binding requires dimerization with another bHLH protein. In terms of processing, serine or threonine phosphorylation within the basic region may regulate neurogenic activity.

It localises to the nucleus. Functionally, probably acts as a transcriptional activator. Mediates neuronal differentiation. Required for the regulation of amacrine cell fate specification in the retina. The chain is Neurogenic differentiation factor 4 (NEUROD4) from Homo sapiens (Human).